A 93-amino-acid chain; its full sequence is Ubiquinol-cytochrome-c reductase complex assembly factor 3 (93 aa).

The Mitochondrial matrix portion of the chain corresponds to 1–7; the sequence is MDSLRKM. A helical transmembrane segment spans residues 8–28; the sequence is LISVAMLGAGAGVGYALLVIV. The mediates lipid-binding stretch occupies residues 23-80; it reads ALLVIVTPGERRKQEMLKEMPLQDPRSREEAARTQQLLLATLQEAATTQENVAWRKNW. The Mitochondrial intermembrane portion of the chain corresponds to 29–93; it reads TPGERRKQEM…GEGGAGGRSP (65 aa).

The protein belongs to the UQCC3 family. As to quaternary structure, associates with the ubiquinol-cytochrome c reductase complex (mitochondrial respiratory chain complex III or cytochrome b-c1 complex). Interacts with UQCC1. Forms a complex, named COMC, composed of UQCC1, UQCC2; UQCC3 and UQCC4; mediates MT-CYB hemylation and association with the first nuclear-encoded complex III subunit UQCRQ. Probably cleaved by OMA1 under mitochondrial stress conditions.

The protein resides in the mitochondrion inner membrane. Required for the assembly of the ubiquinol-cytochrome c reductase complex (mitochondrial respiratory chain complex III or cytochrome b-c1 complex), mediating cytochrome b recruitment and probably stabilization within the complex. Thereby, plays an important role in ATP production by mitochondria. Cardiolipin-binding protein, it may also control the cardiolipin composition of mitochondria membranes and their morphology. This Homo sapiens (Human) protein is Ubiquinol-cytochrome-c reductase complex assembly factor 3.